The following is a 121-amino-acid chain: Group 1 truncated hemoglobin (121 aa).

Position 1 is an N-acetylmethionine (Met1). His73 serves as a coordination point for heme.

The protein belongs to the truncated hemoglobin family. Group I subfamily. Monomer. Requires heme as cofactor.

The sequence is that of Group 1 truncated hemoglobin from Tetrahymena pyriformis.